Reading from the N-terminus, the 523-residue chain is Synaptotagmin-10 (523 aa).

Residues 1-55 are Vesicular-facing; the sequence is MSFRKEDGVSSLCQKALHIITELCFAGQVEWDKCSGIFPADRSGQGGGGTDISVS. Residues 13 to 35 form a cysteine motif region; sequence CQKALHIITELCFAGQVEWDKCS. A helical membrane pass occupies residues 56–76; the sequence is LLAVVVSFCGLALLVVSLFVF. Over 77–523 the chain is Cytoplasmic; sequence WKLCWPCWKS…CSSPRPPSTP (447 aa). Thr-136 is subject to Phosphothreonine. C2 domains lie at 231-352 and 363-496; these read TCGK…TVWK and DLGE…THWH. Positions 262, 268, 320, 321, 322, 325, 328, 394, 400, 454, and 456 each coordinate Ca(2+).

This sequence belongs to the synaptotagmin family. In terms of assembly, homodimer; disulfide-linked via the cysteine motif. Can also form heterodimers with SYT3, SYT6, SYT7 and SYT9. The cofactor is Ca(2+).

It is found in the cytoplasmic vesicle. Its subcellular location is the secretory vesicle membrane. Ca(2+) sensor specifically required for the Ca(2+)-dependent exocytosis of secretory vesicles containing IGF1 in neurons of the olfactory bulb. Exocytosis of IGF1 is required for sensory perception of smell. Not involved in Ca(2+)-dependent synaptic vesicle exocytosis. Acts through Ca(2+) and phospholipid binding to the C2 domain: Ca(2+) induces binding of the C2-domains to phospholipid membranes and to assembled SNARE-complexes; both actions contribute to triggering exocytosis. The sequence is that of Synaptotagmin-10 (Syt10) from Rattus norvegicus (Rat).